A 576-amino-acid polypeptide reads, in one-letter code: MNIFNQLKQDIIAASKQLYNNQEIANTANIETPKDNFNGDLSSNIAMIIAAKESISPREVALKFKEVLTTLPYIASIEIAGPGFINFTIKAESWQASIKDILQHEEKFFEIDIDKSRNINIEYVSANPTGPMHIGHARGAVYGDVLARILQKVGYSVTKEYYVNDAGSQINDLVSTVLLRYREALGEKITIPAGLYPGEYLIPLGQILAKEYGNKLLTMNENERFKIVKNFAVEKMLDLNRKDLADLGIKHDIFFSEQSLHDKGEIEGTVKLLTGMGLIYEGTLPAPKGKVHEEWDNRVQKLFKSTNYGDSQDRPIEKADGSWSYFASDLAYAKDKIDRGANHLIYVLGADHSGYVKRIEAIVKALGKEQVKVDVKICQLVNFVENGVPVKMSKRLGNFASVQDVNHEVGKDIIRFMMLTRQNDKPLDFDLVKVKEQSRENPIFYVQYAHVRTISILSKARELMPESYNNFEEGKYDLSLLSSEEEIEIIKLLASWTKTLEASAKYFEPHRIAFYLINLASRFHSMWNFGKENSDYRFVIESNKELTLARLALASAIQKVIASGLEVIGVEPMDRM.

A 'HIGH' region motif is present at residues 126–136; sequence ANPTGPMHIGH.

It belongs to the class-I aminoacyl-tRNA synthetase family. As to quaternary structure, monomer.

Its subcellular location is the cytoplasm. It carries out the reaction tRNA(Arg) + L-arginine + ATP = L-arginyl-tRNA(Arg) + AMP + diphosphate. The polypeptide is Arginine--tRNA ligase (Rickettsia felis (strain ATCC VR-1525 / URRWXCal2) (Rickettsia azadi)).